A 1485-amino-acid polypeptide reads, in one-letter code: Cystic fibrosis transmembrane conductance regulator (1485 aa).

Topologically, residues Met1–Phe78 are cytoplasmic. A helical transmembrane segment spans residues Phe79–Gln99. The ABC transmembrane type-1 1 domain maps to Phe82–Leu366. At Pro100–Tyr123 the chain is on the extracellular side. Residues Leu124–His147 traverse the membrane as a helical segment. Residues His148 to Leu196 lie on the Cytoplasmic side of the membrane. A helical membrane pass occupies residues Ala197–Trp217. Residues Asp218–Ser223 lie on the Extracellular side of the membrane. The helical transmembrane segment at Ala224–Met244 threads the bilayer. Residues Met245–Lys299 lie on the Cytoplasmic side of the membrane. The chain crosses the membrane as a helical span at residues Ala300–Phe320. The Extracellular portion of the chain corresponds to Leu321–Thr340. The helical transmembrane segment at Ile341–Val359 threads the bilayer. Residues Gln360–Asn860 lie on the Cytoplasmic side of the membrane. ATP contacts are provided by residues Trp402, Ser435, Gly459–Thr466, and Gln494. In terms of domain architecture, ABC transporter 1 spans Ile422 to Gly647. Residues Asn652–Glu833 are disordered R region. A compositionally biased stretch (polar residues) spans Pro750–Thr760. The helical transmembrane segment at Phe861–Ala881 threads the bilayer. The ABC transmembrane type-1 2 domain maps to Ser880–Arg1163. The Extracellular portion of the chain corresponds to Trp882–Ile923. Residues Asn894 and Asn900 are each glycosylated (N-linked (GlcNAc...) asparagine). Residues Tyr924–His944 traverse the membrane as a discontinuously helical segment. Over Ser945–Ser995 the chain is Cytoplasmic. Residues Ile996–Leu1016 form a helical membrane-spanning segment. Over Glu1017–Pro1018 the chain is Extracellular. Residues Tyr1019–Leu1039 traverse the membrane as a helical segment. Topologically, residues His1040 to Thr1100 are cytoplasmic. A helical membrane pass occupies residues Leu1101 to Phe1121. Over Ile1122–Gly1135 the chain is Extracellular. A helical membrane pass occupies residues Ile1136–Ile1156. Over Asp1157–Leu1485 the chain is Cytoplasmic. In terms of domain architecture, ABC transporter 2 spans Met1213–His1446. Residues Tyr1222 and Gly1247–Ser1254 contribute to the ATP site. Residues Arg1458–Leu1485 are disordered. Over residues Glu1474 to Leu1485 the composition is skewed to acidic residues. A PDZ-binding motif is present at residues Thr1483–Leu1485.

This sequence belongs to the ABC transporter superfamily. ABCC family. CFTR transporter (TC 3.A.1.202) subfamily. As to quaternary structure, monomer; does not require oligomerization for channel activity. May form oligomers in the membrane. In terms of processing, phosphorylated; cAMP treatment promotes phosphorylation and activates the channel. Dephosphorylation decreases the ATPase activity (in vitro). Phosphorylation at PKA sites activates the channel. Phosphorylation at PKC sites enhances the response to phosphorylation by PKA.

The protein localises to the apical cell membrane. The protein resides in the early endosome membrane. It localises to the cell membrane. It is found in the recycling endosome membrane. Its subcellular location is the endoplasmic reticulum membrane. It catalyses the reaction ATP + H2O + closed Cl(-) channel = ADP + phosphate + open Cl(-) channel.. It carries out the reaction chloride(in) = chloride(out). The enzyme catalyses hydrogencarbonate(in) = hydrogencarbonate(out). The catalysed reaction is ATP + H2O = ADP + phosphate + H(+). In terms of biological role, epithelial ion channel that plays an important role in the regulation of epithelial ion and water transport and fluid homeostasis. Mediates the transport of chloride ions across the cell membrane. Possesses an intrinsic ATPase activity and utilizes ATP to gate its channel; the passive flow of anions through the channel is gated by cycles of ATP binding and hydrolysis by the ATP-binding domains. The ion channel is also permeable to HCO(3)(-); selectivity depends on the extracellular chloride concentration. Exerts its function also by modulating the activity of other ion channels and transporters. Contributes to the regulation of the pH and the ion content of the epithelial fluid layer. The chain is Cystic fibrosis transmembrane conductance regulator from Xenopus laevis (African clawed frog).